Here is a 125-residue protein sequence, read N- to C-terminus: Large ribosomal subunit protein bL12 (125 aa).

It belongs to the bacterial ribosomal protein bL12 family. In terms of assembly, homodimer. Part of the ribosomal stalk of the 50S ribosomal subunit. Forms a multimeric L10(L12)X complex, where L10 forms an elongated spine to which 2 to 4 L12 dimers bind in a sequential fashion. Binds GTP-bound translation factors.

In terms of biological role, forms part of the ribosomal stalk which helps the ribosome interact with GTP-bound translation factors. Is thus essential for accurate translation. This chain is Large ribosomal subunit protein bL12, found in Methylobacterium radiotolerans (strain ATCC 27329 / DSM 1819 / JCM 2831 / NBRC 15690 / NCIMB 10815 / 0-1).